A 157-amino-acid chain; its full sequence is 2-C-methyl-D-erythritol 2,4-cyclodiphosphate synthase (157 aa).

The a divalent metal cation site is built by D8 and H10. 4-CDP-2-C-methyl-D-erythritol 2-phosphate-binding positions include 8–10 (DVH) and 34–35 (HS). H42 contributes to the a divalent metal cation binding site. 4-CDP-2-C-methyl-D-erythritol 2-phosphate contacts are provided by residues 56-58 (DIG), 61-65 (FPDSD), 132-135 (TTTE), F139, and R142.

It belongs to the IspF family. In terms of assembly, homotrimer. The cofactor is a divalent metal cation.

The catalysed reaction is 4-CDP-2-C-methyl-D-erythritol 2-phosphate = 2-C-methyl-D-erythritol 2,4-cyclic diphosphate + CMP. The protein operates within isoprenoid biosynthesis; isopentenyl diphosphate biosynthesis via DXP pathway; isopentenyl diphosphate from 1-deoxy-D-xylulose 5-phosphate: step 4/6. Functionally, involved in the biosynthesis of isopentenyl diphosphate (IPP) and dimethylallyl diphosphate (DMAPP), two major building blocks of isoprenoid compounds. Catalyzes the conversion of 4-diphosphocytidyl-2-C-methyl-D-erythritol 2-phosphate (CDP-ME2P) to 2-C-methyl-D-erythritol 2,4-cyclodiphosphate (ME-CPP) with a corresponding release of cytidine 5-monophosphate (CMP). The polypeptide is 2-C-methyl-D-erythritol 2,4-cyclodiphosphate synthase (Syntrophomonas wolfei subsp. wolfei (strain DSM 2245B / Goettingen)).